Here is a 340-residue protein sequence, read N- to C-terminus: MLDPRARTLLKTLIERYIADGQPVGSRTLSRYSGLELSPATIRNVMSDLEELGLVSSPHTSAGRVPTPRGYRLFVDTMLTVESPIDSDAVTRLVQTTLQAGEPQQRVVAAAASVLSNLSQFAGVVLTPRRSHVFKQIEFLRLSDKRILLIIVTPEGDVQNRMIATQRDYAPAQLTEASNYINAHFAGLSFDEVRRRLREEIDQLRGDMTALMHAAVTASTEEPDDEETVLISGERNLLEVADLSSDMARLRKLFDVFDQKTSLLQLLDVSSHAQGVQIFIGGESTLVPIDEMSVVTAPYEVNGKIVGTLGVIGPTRMAYNRVIPIVDITARLLSLTLSQQ.

The protein belongs to the HrcA family.

Its function is as follows. Negative regulator of class I heat shock genes (grpE-dnaK-dnaJ and groELS operons). Prevents heat-shock induction of these operons. This Burkholderia mallei (strain NCTC 10247) protein is Heat-inducible transcription repressor HrcA.